The following is a 118-amino-acid chain: Sporulation protein YjcA (118 aa).

3 helical membrane passes run 8–28 (IVLL…DTIM), 62–82 (FIGE…GFLI), and 92–112 (AQWL…ETLV).

Belongs to the UPF0713 family.

It is found in the cell membrane. Functionally, involved in sporulation. This chain is Sporulation protein YjcA (yjcA), found in Bacillus subtilis (strain 168).